The sequence spans 379 residues: MTRPHLKKFRRIVVKVGSSLLIDSAAGKVRGEWLSALAADIAGLHGDGCDVLVVSSGAVALGRSKLKLPRGPLKLEESQAAAAVGQIALARIWSKVLADHGIGAGQILVTWQDTEERRRYLNARSTIAKLLEWRAVPVINENDTVATNEIRYGDNDRLAARVATMASADLLILLSDIDGLYDAPPHLNPDAKLITVVKRVTADIEAMAGSAASELSRGGMRTKIEAAKIATTAGTHMLIASGTIEHPLRAIMDGGPCTWFLTPANPVTARKRWIAGSLEPRGTLAIDAGAVAALRAGKSLLPAGVTRIDGHFARGDAVIVRGPNGHEIGRGLVAYDAADADRIKGRSSSDAAQLLGVRGRVEMIHRDDLVVGGPLGDSA.

K15 lines the ATP pocket. Residues S56, D143, and N155 each contribute to the substrate site. Position 175 to 176 (S175 to D176) interacts with ATP. The 78-residue stretch at R281–R358 folds into the PUA domain.

Belongs to the glutamate 5-kinase family.

It localises to the cytoplasm. The enzyme catalyses L-glutamate + ATP = L-glutamyl 5-phosphate + ADP. It functions in the pathway amino-acid biosynthesis; L-proline biosynthesis; L-glutamate 5-semialdehyde from L-glutamate: step 1/2. Catalyzes the transfer of a phosphate group to glutamate to form L-glutamate 5-phosphate. This chain is Glutamate 5-kinase, found in Nitrobacter winogradskyi (strain ATCC 25391 / DSM 10237 / CIP 104748 / NCIMB 11846 / Nb-255).